The sequence spans 509 residues: tRNA-2-methylthio-N(6)-dimethylallyladenosine synthase (509 aa).

Residues 1–13 (MNEQQRLASQQAN) are compositionally biased toward polar residues. Residues 1-26 (MNEQQRLASQQANSSKKKEEKDYSKY) are disordered. Over residues 16–25 (KKKEEKDYSK) the composition is skewed to basic and acidic residues. In terms of domain architecture, MTTase N-terminal spans 66–184 (RKFYIRTYGC…LPYILKDAMF (119 aa)). [4Fe-4S] cluster contacts are provided by cysteine 75, cysteine 111, cysteine 145, cysteine 221, cysteine 225, and cysteine 228. In terms of domain architecture, Radical SAM core spans 207-437 (RRGDIKAWVN…NALVNKLAIE (231 aa)). The region spanning 440–503 (NRYKGQIVEV…TWSLNGELVE (64 aa)) is the TRAM domain.

It belongs to the methylthiotransferase family. MiaB subfamily. In terms of assembly, monomer. [4Fe-4S] cluster is required as a cofactor.

It localises to the cytoplasm. The enzyme catalyses N(6)-dimethylallyladenosine(37) in tRNA + (sulfur carrier)-SH + AH2 + 2 S-adenosyl-L-methionine = 2-methylsulfanyl-N(6)-dimethylallyladenosine(37) in tRNA + (sulfur carrier)-H + 5'-deoxyadenosine + L-methionine + A + S-adenosyl-L-homocysteine + 2 H(+). Its function is as follows. Catalyzes the methylthiolation of N6-(dimethylallyl)adenosine (i(6)A), leading to the formation of 2-methylthio-N6-(dimethylallyl)adenosine (ms(2)i(6)A) at position 37 in tRNAs that read codons beginning with uridine. This is tRNA-2-methylthio-N(6)-dimethylallyladenosine synthase from Bacillus cereus (strain ATCC 10987 / NRS 248).